Reading from the N-terminus, the 132-residue chain is Aspartate 1-decarboxylase (132 aa).

S25 (schiff-base intermediate with substrate; via pyruvic acid) is an active-site residue. Residue S25 is modified to Pyruvic acid (Ser). Residue T57 coordinates substrate. The active-site Proton donor is Y58. Residue 73–75 (GAA) participates in substrate binding.

The protein belongs to the PanD family. As to quaternary structure, heterooctamer of four alpha and four beta subunits. Pyruvate serves as cofactor. In terms of processing, is synthesized initially as an inactive proenzyme, which is activated by self-cleavage at a specific serine bond to produce a beta-subunit with a hydroxyl group at its C-terminus and an alpha-subunit with a pyruvoyl group at its N-terminus.

Its subcellular location is the cytoplasm. It carries out the reaction L-aspartate + H(+) = beta-alanine + CO2. The protein operates within cofactor biosynthesis; (R)-pantothenate biosynthesis; beta-alanine from L-aspartate: step 1/1. Its function is as follows. Catalyzes the pyruvoyl-dependent decarboxylation of aspartate to produce beta-alanine. This chain is Aspartate 1-decarboxylase, found in Pelotomaculum thermopropionicum (strain DSM 13744 / JCM 10971 / SI).